Here is a 310-residue protein sequence, read N- to C-terminus: HPr kinase/phosphorylase 1 (310 aa).

Active-site residues include His139 and Lys160. 154–161 contacts ATP; that stretch reads GQSGVGKS. Ser161 contacts Mg(2+). The Proton acceptor; for phosphorylation activity. Proton donor; for dephosphorylation activity role is filled by Asp178. The important for the catalytic mechanism of both phosphorylation and dephosphorylation stretch occupies residues 202-211; sequence LEIRGLGIIN. A Mg(2+)-binding site is contributed by Glu203. The active site involves Arg244. The important for the catalytic mechanism of dephosphorylation stretch occupies residues 265–270; it reads PVRPGR.

It belongs to the HPrK/P family. In terms of assembly, homohexamer. Requires Mg(2+) as cofactor.

It catalyses the reaction [HPr protein]-L-serine + ATP = [HPr protein]-O-phospho-L-serine + ADP + H(+). The catalysed reaction is [HPr protein]-O-phospho-L-serine + phosphate + H(+) = [HPr protein]-L-serine + diphosphate. Catalyzes the ATP- as well as the pyrophosphate-dependent phosphorylation of a specific serine residue in HPr, a phosphocarrier protein of the phosphoenolpyruvate-dependent sugar phosphotransferase system (PTS). HprK/P also catalyzes the pyrophosphate-producing, inorganic phosphate-dependent dephosphorylation (phosphorolysis) of seryl-phosphorylated HPr (P-Ser-HPr). The two antagonistic activities of HprK/P are regulated by several intracellular metabolites, which change their concentration in response to the absence or presence of rapidly metabolisable carbon sources (glucose, fructose, etc.) in the growth medium. Also phosphorylates/dephosphorylates the HPr-like catabolite repression protein crh on a specific serine residue. Therefore, by controlling the phosphorylation state of HPr and crh, HPrK/P is a sensor enzyme that plays a major role in the regulation of carbon metabolism and sugar transport: it mediates carbon catabolite repression (CCR), and regulates PTS-catalyzed carbohydrate uptake and inducer exclusion. The sequence is that of HPr kinase/phosphorylase 1 (hprK1) from Oceanobacillus iheyensis (strain DSM 14371 / CIP 107618 / JCM 11309 / KCTC 3954 / HTE831).